The chain runs to 434 residues: Nicotinate phosphoribosyltransferase (434 aa).

His-242 is subject to Phosphohistidine; by autocatalysis.

Belongs to the NAPRTase family. Post-translationally, transiently phosphorylated on a His residue during the reaction cycle. Phosphorylation strongly increases the affinity for substrates and increases the rate of nicotinate D-ribonucleotide production. Dephosphorylation regenerates the low-affinity form of the enzyme, leading to product release.

The catalysed reaction is nicotinate + 5-phospho-alpha-D-ribose 1-diphosphate + ATP + H2O = nicotinate beta-D-ribonucleotide + ADP + phosphate + diphosphate. It participates in cofactor biosynthesis; NAD(+) biosynthesis; nicotinate D-ribonucleotide from nicotinate: step 1/1. Its function is as follows. Catalyzes the synthesis of beta-nicotinate D-ribonucleotide from nicotinate and 5-phospho-D-ribose 1-phosphate at the expense of ATP. The protein is Nicotinate phosphoribosyltransferase of Sinorhizobium medicae (strain WSM419) (Ensifer medicae).